The sequence spans 805 residues: MAHRCLLLWGRGACRPRGMPPMLLPGGRTGSTERLYLRMLYRYATTQAKTSRNSLLTDVIAAYQRLCSRPPKGFEKYFPNGKNGKKTSEPKEVMGEKKEPKPAAAPRPSGGGVGGGGKRGGKKDDSHWWSRFQKGDIPWDDKEFKMYFLWTALFWGGFLFYFLFKSSGREITWKDFANNYLSKGVVDRLEVVNKRFVRVTFTPGKTPVDGQYVWFNIGSVDTFERNLETLQQELGIEGENRVPVVYIAESDGSFLLSMLPTVLIIAFLLYTIRRGPAGIGRTGRGMGGLFSVGETTAKVLKDEIDVKFKDVAGCEEAKLEIMEFVNFLKNPKQYQDLGAKIPKGAILTGPPGTGKTLLAKATAGEANVPFITVSGSEFLEMFVGVGPARVRDLFALARKNAPCILFIDEIDAVGRKRGRGNFGGQSEQENTLNQLLVEMDGFNTTTNVVILAGTNRPDILDPALMRPGRFDRQIFIGPPDIKGRASIFKVHLRPLKLDSTLEKEKLARKLASLTPGFSGADVANVCNEAALIAARHLSDSINQKHFEQAIERVIGGLEKKTQVLQPEEKKTVAYHEAGHAVAGWYLEHADPLLKVSIIPRGKGLGYAQYLPREQYLYTREQLLDRMCMTLGGRVSEEIFFGRITTGAQDDLRKVTQSAYAQIVQFGMNEKVGQISFDLPRQGDMVLEKPYSEATARLIDDEVRILINDAYKRTVALLTEKKADVEKVALLLLEKEVLDKNDMVELLGPRPFAEKSTYEEFVEGTGSLDEDTSLPEGLKDWNREREGSEEPSGEKVTSPVQGAGPA.

The N-terminal 39 residues, 1-39, are a transit peptide targeting the mitochondrion; it reads MAHRCLLLWGRGACRPRGMPPMLLPGGRTGSTERLYLRM. Residues 40–67 constitute a propeptide, removed in mature form; that stretch reads LYRYATTQAKTSRNSLLTDVIAAYQRLC. Residues 74–127 form a disordered region; sequence FEKYFPNGKNGKKTSEPKEVMGEKKEPKPAAAPRPSGGGVGGGGKRGGKKDDSH. The segment covering 86 to 101 has biased composition (basic and acidic residues); sequence KTSEPKEVMGEKKEPK. The segment covering 109–118 has biased composition (gly residues); the sequence is SGGGVGGGGK. Residue K118 is modified to N6-succinyllysine. Helical transmembrane passes span 144–164 and 252–272; these read FKMY…YFLF and GSFL…LYTI. ATP-binding residues include V311, A312, T353, G354, K355, T356, L357, and H491. H575 serves as a coordination point for Zn(2+). Residue E576 is part of the active site. Zn(2+) contacts are provided by H579 and D650. The disordered stretch occupies residues 760–805; the sequence is FVEGTGSLDEDTSLPEGLKDWNREREGSEEPSGEKVTSPVQGAGPA. Basic and acidic residues predominate over residues 776 to 787; it reads GLKDWNREREGS.

In the N-terminal section; belongs to the AAA ATPase family. The protein in the C-terminal section; belongs to the peptidase M41 family. In terms of assembly, homohexamer. Forms heterohexamers with SPG7. The m-AAA protease is either composed of homohexamers of AFG3L2 or heterohexamers of AFG3L2 and SPG7. Interacts with MAIP1. Interacts with DNAJC19. Interacts with PHB2. Requires Zn(2+) as cofactor. Upon import into the mitochondrion, the N-terminal transit peptide is cleaved to generate an intermediate form which undergoes autocatalytic proteolytic processing to generate the proteolytically active mature form.

It is found in the mitochondrion inner membrane. The catalysed reaction is ATP + H2O = ADP + phosphate + H(+). In terms of biological role, catalytic component of the m-AAA protease, a protease that plays a key role in proteostasis of inner mitochondrial membrane proteins, and which is essential for axonal and neuron development. AFG3L2 possesses both ATPase and protease activities: the ATPase activity is required to unfold substrates, threading them into the internal proteolytic cavity for hydrolysis into small peptide fragments. The m-AAA protease carries out protein quality control in the inner membrane of the mitochondria by mediating degradation of mistranslated or misfolded polypeptides. The m-AAA protease complex also promotes the processing and maturation of mitochondrial proteins, such as MRPL32/bL32m, PINK1 and SP7. Mediates protein maturation of the mitochondrial ribosomal subunit MRPL32/bL32m by catalyzing the cleavage of the presequence of MRPL32/bL32m prior to assembly into the mitochondrial ribosome. Required for SPG7 maturation into its active mature form after SPG7 cleavage by mitochondrial-processing peptidase (MPP). Required for the maturation of PINK1 into its 52kDa mature form after its cleavage by mitochondrial-processing peptidase (MPP). Acts as a regulator of calcium in neurons by mediating degradation of SMDT1/EMRE before its assembly with the uniporter complex, limiting the availability of SMDT1/EMRE for MCU assembly and promoting efficient assembly of gatekeeper subunits with MCU. Promotes the proteolytic degradation of GHITM upon hyperpolarization of mitochondria: progressive GHITM degradation leads to respiratory complex I degradation and broad reshaping of the mitochondrial proteome by AFG3L2. Also acts as a regulator of mitochondrial glutathione homeostasis by mediating cleavage and degradation of SLC25A39. SLC25A39 cleavage is prevented when SLC25A39 binds iron-sulfur. Involved in the regulation of OMA1-dependent processing of OPA1. May act by mediating processing of OMA1 precursor, participating in OMA1 maturation. This Bos taurus (Bovine) protein is Mitochondrial inner membrane m-AAA protease component AFG3L2 (AFG3L2).